The sequence spans 282 residues: Undecaprenyl-diphosphatase (282 aa).

The next 7 membrane-spanning stretches (helical) occupy residues 40-60 (GAAFSAIVQIGTLAAVLIYFY), 87-107 (MGWMIAAGTMPIVILGLLFKT), 116-136 (LYWISVALIVLALMLTLAEWL), 153-173 (IGWKEALLIGLAQSIALIPGS), 196-216 (FSFLLSLPAVFAAGIYQLYET), 229-249 (NLAVATLFAGIVGYASIAFLI), and 256-276 (STALFILYRIALGVGILGLIA).

It belongs to the UppP family.

Its subcellular location is the cell inner membrane. The catalysed reaction is di-trans,octa-cis-undecaprenyl diphosphate + H2O = di-trans,octa-cis-undecaprenyl phosphate + phosphate + H(+). Its function is as follows. Catalyzes the dephosphorylation of undecaprenyl diphosphate (UPP). Confers resistance to bacitracin. This Chlorobium phaeobacteroides (strain BS1) protein is Undecaprenyl-diphosphatase.